The primary structure comprises 120 residues: Large ribosomal subunit protein uL18 (120 aa).

It belongs to the universal ribosomal protein uL18 family. As to quaternary structure, part of the 50S ribosomal subunit; part of the 5S rRNA/L5/L18/L25 subcomplex. Contacts the 5S and 23S rRNAs.

This is one of the proteins that bind and probably mediate the attachment of the 5S RNA into the large ribosomal subunit, where it forms part of the central protuberance. In Maricaulis maris (strain MCS10) (Caulobacter maris), this protein is Large ribosomal subunit protein uL18.